Reading from the N-terminus, the 117-residue chain is Immunoglobulin lambda variable 6-57 (117 aa).

Residues 1 to 19 (MAWAPLLLTLLAHCTGSWA) form the signal peptide. Residues 20–44 (NFMLTQPHSVSESPGKTVTISCTGS) form a framework-1 region. The 98-residue stretch at 20–117 (NFMLTQPHSV…YYCQSYDSSN (98 aa)) folds into the Ig-like domain. C41 and C110 form a disulfide bridge. The tract at residues 45–52 (SGSIASNY) is complementarity-determining-1. The segment at 53–69 (VQWYQQRPGSAPTTVIY) is framework-2. The disordered stretch occupies residues 65–97 (TTVIYEDNQRPSGVPDRFSGSIDSSSNSASLTI). Residues 70 to 72 (EDN) form a complementarity-determining-2 region. The interval 73 to 110 (QRPSGVPDRFSGSIDSSSNSASLTISGLKTEDEADYYC) is framework-3. Low complexity predominate over residues 83-97 (SGSIDSSSNSASLTI). Residues 111–117 (QSYDSSN) form a complementarity-determining-3 region.

As to quaternary structure, immunoglobulins are composed of two identical heavy chains and two identical light chains; disulfide-linked.

The protein localises to the secreted. The protein resides in the cell membrane. Its function is as follows. V region of the variable domain of immunoglobulin light chains that participates in the antigen recognition. Immunoglobulins, also known as antibodies, are membrane-bound or secreted glycoproteins produced by B lymphocytes. In the recognition phase of humoral immunity, the membrane-bound immunoglobulins serve as receptors which, upon binding of a specific antigen, trigger the clonal expansion and differentiation of B lymphocytes into immunoglobulins-secreting plasma cells. Secreted immunoglobulins mediate the effector phase of humoral immunity, which results in the elimination of bound antigens. The antigen binding site is formed by the variable domain of one heavy chain, together with that of its associated light chain. Thus, each immunoglobulin has two antigen binding sites with remarkable affinity for a particular antigen. The variable domains are assembled by a process called V-(D)-J rearrangement and can then be subjected to somatic hypermutations which, after exposure to antigen and selection, allow affinity maturation for a particular antigen. The protein is Immunoglobulin lambda variable 6-57 of Homo sapiens (Human).